Here is a 286-residue protein sequence, read N- to C-terminus: Elongation factor Ts (286 aa).

The tract at residues 82–85 is involved in Mg(2+) ion dislocation from EF-Tu; it reads TDFV.

The protein belongs to the EF-Ts family.

It localises to the cytoplasm. Functionally, associates with the EF-Tu.GDP complex and induces the exchange of GDP to GTP. It remains bound to the aminoacyl-tRNA.EF-Tu.GTP complex up to the GTP hydrolysis stage on the ribosome. This is Elongation factor Ts from Hahella chejuensis (strain KCTC 2396).